Consider the following 637-residue polypeptide: Chaperone protein HtpG (637 aa).

The tract at residues 1–345 is a; substrate-binding; the sequence is MSQQETHGFQ…SNDLPLNVSR (345 aa). Residues 346–562 form a b region; sequence EILQDNHITK…EGEMSTQMIK (217 aa). The segment at 563–637 is c; it reads LMQAAGQPVP…MNQMLLANMK (75 aa).

Belongs to the heat shock protein 90 family. Homodimer.

The protein localises to the cytoplasm. In terms of biological role, molecular chaperone. Has ATPase activity. The chain is Chaperone protein HtpG from Shewanella sp. (strain W3-18-1).